The primary structure comprises 90 residues: Protein S100-A6 (90 aa).

2 EF-hand domains span residues 12-47 (LVAI…IGSK) and 48-83 (LQDA…LALI). Positions 28 and 33 each coordinate Ca(2+). Residue Lys40 is modified to N6-acetyllysine. Ser46 carries the post-translational modification Phosphoserine. Lys47 is subject to N6-acetyllysine; alternate. Position 47 is an N6-succinyllysine; alternate (Lys47). Residues Asp61, Asn63, Asp65, Glu67, and Glu72 each coordinate Ca(2+).

This sequence belongs to the S-100 family. As to quaternary structure, homodimer; head to tail assembly of 2 subunits. Interacts with CACYBP in a calcium-dependent manner. Interacts with ANXA2 and ANXA11 (via N-terminus). Interacts with SUGT1. Interacts with TP53; has higher affinity for TP53 that is phosphorylated on its N-terminal domain, and lower affinity for TP53 that is phosphorylated on its C-terminal domain. Interacts with tropomyosin. Interacts with FKBP4. Interacts with PPP5C (via TPR repeats); the interaction is calcium-dependent and modulates PPP5C activity. Interacts with TPPP; this interaction inhibits TPPP dimerization. The N-terminus is blocked.

The protein localises to the nucleus envelope. Its subcellular location is the cytoplasm. The protein resides in the cell membrane. Its function is as follows. May function as calcium sensor and modulator, contributing to cellular calcium signaling. May function by interacting with other proteins, such as TPR-containing proteins, and indirectly play a role in many physiological processes such as the reorganization of the actin cytoskeleton and in cell motility. Binds 2 calcium ions. Calcium binding is cooperative. The sequence is that of Protein S100-A6 (S100A6) from Homo sapiens (Human).